The chain runs to 428 residues: Glutamyl-tRNA reductase (428 aa).

Residues 49-52 (TCNR), Ser-109, 114-116 (EGQ), and Gln-120 contribute to the substrate site. Cys-50 serves as the catalytic Nucleophile. 189–194 (GAGKMS) lines the NADP(+) pocket.

It belongs to the glutamyl-tRNA reductase family. In terms of assembly, homodimer.

It carries out the reaction (S)-4-amino-5-oxopentanoate + tRNA(Glu) + NADP(+) = L-glutamyl-tRNA(Glu) + NADPH + H(+). The protein operates within porphyrin-containing compound metabolism; protoporphyrin-IX biosynthesis; 5-aminolevulinate from L-glutamyl-tRNA(Glu): step 1/2. It functions in the pathway porphyrin-containing compound metabolism; chlorophyll biosynthesis. Catalyzes the NADPH-dependent reduction of glutamyl-tRNA(Glu) to glutamate 1-semialdehyde (GSA). The polypeptide is Glutamyl-tRNA reductase (Gloeothece citriformis (strain PCC 7424) (Cyanothece sp. (strain PCC 7424))).